We begin with the raw amino-acid sequence, 470 residues long: Arginine ADP-riboxanase OspC1 (470 aa).

His138, Gln139, Ser140, Leu144, Ile157, Asn167, Phe183, His201, Phe206, Asp226, and Glu320 together coordinate NAD(+). The active site involves Glu320. 3 ANK repeats span residues 363 to 392 (IALQ…ITRQ), 399 to 431 (HELY…DVNT), and 438 to 467 (SGDC…TSDN).

The protein belongs to the OspC family. Interacts with host calmodulin (CALM1, CALM2 and/or CALM3); specifically interacts with the apo form of calmodulin, preventing calcium-binding.

The protein localises to the secreted. The protein resides in the host nucleus. The catalysed reaction is L-arginyl-[protein] + NAD(+) = ADP-riboxanated L-argininyl-[protein] + nicotinamide + NH4(+) + H(+). Functionally, ADP-riboxanase effector that mediates arginine ADP-riboxanation of host caspases. ADP-riboxanation of host apoptotic caspases (CASP3, CASP8 and CASP9) prevents their activation, thereby inhibiting host cell extrinsic and intrinsic apoptosis. Does not catalyze ADP-riboxanation of host CASP4/CASP11. Independently of its ADP-riboxanase activity, acts as an inhibitor of calcium signaling by inhibiting host calmodulin, preventing activation of the JAK-STAT signaling pathway in response to interferon-beta. Mechanistically, acts by binding to the apo form of calmodulin, preventing calcium-binding and ability to activate host CaMK2 (CAMKII), which is required to stimulate the JAK-STAT signaling pathway in response to interferon-beta. In Shigella flexneri, this protein is Arginine ADP-riboxanase OspC1.